The sequence spans 726 residues: Dipeptidyl-peptidase 5 (726 aa).

Residues 1–19 (MAAAKWLIASLAFASSGLA) form the signal peptide. Asparagine 96 and asparagine 252 each carry an N-linked (GlcNAc...) asparagine glycan. The tract at residues 269 to 291 (AEPINKRNGPRTPQGIEGASSSP) is disordered. Catalysis depends on serine 558, which acts as the Charge relay system. An N-linked (GlcNAc...) asparagine glycan is attached at asparagine 605. Active-site charge relay system residues include aspartate 641 and histidine 673. Asparagine 699 carries an N-linked (GlcNAc...) asparagine glycan.

The protein belongs to the peptidase S9C family.

It localises to the secreted. This is Dipeptidyl-peptidase 5 (DPPV) from Arthroderma benhamiae (Trichophyton mentagrophytes).